A 149-amino-acid polypeptide reads, in one-letter code: Hordoindoline-A (149 aa).

Positions 1–19 (MKALFLMGLLALVASAAFA) are cleaved as a signal peptide. A propeptide spanning residues 20–28 (QYGEVVGSY) is cleaved from the precursor. The propeptide at 148 to 149 (YW) is removed in mature form.

Post-translationally, five disulfide bonds are present. Found in endosperm and aleurone layer of developing kernels, but not in the embryo.

The protein resides in the membrane. It is found in the secreted. It localises to the extracellular space. Acts as a membranotoxin, probably through its antibacterial and antifungal activities, contributing to the defense mechanism of the plant against predators. Forms monovalent cation-selective ion channels in membranes. Contributes to grain texture and hardness. This chain is Hordoindoline-A (HINA), found in Hordeum vulgare (Barley).